A 275-amino-acid chain; its full sequence is Large ribosomal subunit protein uL2 (275 aa).

2 disordered regions span residues 24-47 (IHKG…NHHG) and 227-261 (PVDH…KTRK).

The protein belongs to the universal ribosomal protein uL2 family. Part of the 50S ribosomal subunit. Forms a bridge to the 30S subunit in the 70S ribosome.

Its function is as follows. One of the primary rRNA binding proteins. Required for association of the 30S and 50S subunits to form the 70S ribosome, for tRNA binding and peptide bond formation. It has been suggested to have peptidyltransferase activity; this is somewhat controversial. Makes several contacts with the 16S rRNA in the 70S ribosome. The polypeptide is Large ribosomal subunit protein uL2 (Xylella fastidiosa (strain M12)).